We begin with the raw amino-acid sequence, 263 residues long: Type II restriction enzyme TaqI (263 aa).

Post-translationally, only 15% of purified enzyme (upon expression in E.coli) can be sequenced, suggesting the remainder has a blocked N-terminus.

It carries out the reaction Endonucleolytic cleavage of DNA to give specific double-stranded fragments with terminal 5'-phosphates.. Its function is as follows. A P subtype restriction enzyme that recognizes the double-stranded sequence 5'-TCGA-3' and cleaves after T-1. The polypeptide is Type II restriction enzyme TaqI (taqIR) (Thermus aquaticus).